The chain runs to 135 residues: Small ribosomal subunit protein uS12 (135 aa).

Aspartate 89 is modified (3-methylthioaspartic acid). The interval 101–135 is disordered; the sequence is SLDTSGVADRKQSRSKYGAKQPKAGAAAPVKGKRR. Positions 116–135 are enriched in low complexity; it reads KYGAKQPKAGAAAPVKGKRR.

The protein belongs to the universal ribosomal protein uS12 family. Part of the 30S ribosomal subunit. Contacts proteins S8 and S17. May interact with IF1 in the 30S initiation complex.

Its function is as follows. With S4 and S5 plays an important role in translational accuracy. Functionally, interacts with and stabilizes bases of the 16S rRNA that are involved in tRNA selection in the A site and with the mRNA backbone. Located at the interface of the 30S and 50S subunits, it traverses the body of the 30S subunit contacting proteins on the other side and probably holding the rRNA structure together. The combined cluster of proteins S8, S12 and S17 appears to hold together the shoulder and platform of the 30S subunit. The protein is Small ribosomal subunit protein uS12 of Chlorobium phaeobacteroides (strain DSM 266 / SMG 266 / 2430).